The sequence spans 1275 residues: Serine/threonine-protein kinase ULK4 (1275 aa).

The region spanning 4 to 280 is the Protein kinase domain; sequence FILYEEIGRG…WTRLLQHSFW (277 aa). 2 disordered regions span residues 299 to 350 and 364 to 392; these read SRNT…KSTL and RPTP…TSPL. Over residues 336–348 the composition is skewed to basic and acidic residues; it reads FRLENPTEFRPKS. Over residues 364-373 the composition is skewed to polar residues; sequence RPTPRTSTAV. 5 HEAT repeats span residues 842 to 880, 926 to 964, 1025 to 1063, 1151 to 1189, and 1213 to 1253; these read LKLC…ILSH, STVV…LLVN, LVEE…NLVA, NRPL…LYGG, and PKEQ…LAPG.

It belongs to the protein kinase superfamily. Ser/Thr protein kinase family. APG1/unc-51/ULK1 subfamily. As to expression, expressed in the brain, mainly in postmitotic neurons, including GABAergic neurons, but not in astrocytes (at protein level).

It carries out the reaction L-seryl-[protein] + ATP = O-phospho-L-seryl-[protein] + ADP + H(+). The catalysed reaction is L-threonyl-[protein] + ATP = O-phospho-L-threonyl-[protein] + ADP + H(+). In terms of biological role, may be involved in the remodeling of cytoskeletal components, such as alpha-tubulin, and in this way regulates neurite branching and elongation, as well as cell motility. The chain is Serine/threonine-protein kinase ULK4 (ULK4) from Homo sapiens (Human).